A 293-amino-acid polypeptide reads, in one-letter code: Elongation factor Ts (293 aa).

The tract at residues 80–83 is involved in Mg(2+) ion dislocation from EF-Tu; the sequence is TDFV.

This sequence belongs to the EF-Ts family.

It localises to the cytoplasm. Functionally, associates with the EF-Tu.GDP complex and induces the exchange of GDP to GTP. It remains bound to the aminoacyl-tRNA.EF-Tu.GTP complex up to the GTP hydrolysis stage on the ribosome. The polypeptide is Elongation factor Ts (Burkholderia cenocepacia (strain ATCC BAA-245 / DSM 16553 / LMG 16656 / NCTC 13227 / J2315 / CF5610) (Burkholderia cepacia (strain J2315))).